The primary structure comprises 510 residues: D-alanine--D-alanyl carrier protein ligase (510 aa).

ATP is bound at residue 157–158 (TS). Residue aspartate 202 participates in D-alanine binding. Residue 297–302 (NTYGPT) coordinates ATP. Valine 306 is a binding site for D-alanine. Residues aspartate 389 and lysine 498 each contribute to the ATP site. Lysine 498 is a D-alanine binding site.

Belongs to the ATP-dependent AMP-binding enzyme family. DltA subfamily.

It is found in the cytoplasm. The enzyme catalyses holo-[D-alanyl-carrier protein] + D-alanine + ATP = D-alanyl-[D-alanyl-carrier protein] + AMP + diphosphate. Its pathway is cell wall biogenesis; lipoteichoic acid biosynthesis. In terms of biological role, catalyzes the first step in the D-alanylation of lipoteichoic acid (LTA), the activation of D-alanine and its transfer onto the D-alanyl carrier protein (Dcp) DltC. In an ATP-dependent two-step reaction, forms a high energy D-alanyl-AMP intermediate, followed by transfer of the D-alanyl residue as a thiol ester to the phosphopantheinyl prosthetic group of the Dcp. D-alanylation of LTA plays an important role in modulating the properties of the cell wall in Gram-positive bacteria, influencing the net charge of the cell wall. The polypeptide is D-alanine--D-alanyl carrier protein ligase (Listeria monocytogenes serotype 4a (strain HCC23)).